Reading from the N-terminus, the 35-residue chain is ECRYLFGGCKTTADCCKHLGCKFRDKYCAWDFTFS.

3 disulfides stabilise this stretch: Cys-2-Cys-16, Cys-9-Cys-21, and Cys-15-Cys-28. Residues 4–6 (YLF) are involved in active face.

This sequence belongs to the neurotoxin 10 (Hwtx-1) family. 09 (HaTx) subfamily. As to expression, expressed by the venom gland.

The protein localises to the secreted. Inhibitor of voltage-gated potassium channels. Inhibits Kv2.1/KCNB1 channels, by shifting activation of the channel to more depolarized voltages. The toxin binding sites may be situated on the S3-S4 extracellular linker of the channel. One, two, three or four toxin molecules may bind the Kv2.1/KCNB1 channel. May need to partition into the membrane in order to bind to the channel. Antibacterial activity is not observed. This chain is Kappa-theraphotoxin-Gr1b, found in Grammostola rosea (Chilean rose tarantula).